The following is a 155-amino-acid chain: SsrA-binding protein (155 aa).

This sequence belongs to the SmpB family.

The protein localises to the cytoplasm. Its function is as follows. Required for rescue of stalled ribosomes mediated by trans-translation. Binds to transfer-messenger RNA (tmRNA), required for stable association of tmRNA with ribosomes. tmRNA and SmpB together mimic tRNA shape, replacing the anticodon stem-loop with SmpB. tmRNA is encoded by the ssrA gene; the 2 termini fold to resemble tRNA(Ala) and it encodes a 'tag peptide', a short internal open reading frame. During trans-translation Ala-aminoacylated tmRNA acts like a tRNA, entering the A-site of stalled ribosomes, displacing the stalled mRNA. The ribosome then switches to translate the ORF on the tmRNA; the nascent peptide is terminated with the 'tag peptide' encoded by the tmRNA and targeted for degradation. The ribosome is freed to recommence translation, which seems to be the essential function of trans-translation. The sequence is that of SsrA-binding protein from Streptococcus pyogenes serotype M4 (strain MGAS10750).